Consider the following 403-residue polypeptide: Vitamin D(3) 25-hydroxylase (403 aa).

Cys-347 is a binding site for heme.

This sequence belongs to the cytochrome P450 family. It depends on heme as a cofactor.

The protein localises to the cytoplasm. It catalyses the reaction 5beta-cholestane-3alpha,7alpha,12alpha-triol + 6 reduced [adrenodoxin] + 3 O2 + 5 H(+) = (25R)-3alpha,7alpha,12alpha-trihydroxy-5beta-cholestan-26-oate + 6 oxidized [adrenodoxin] + 4 H2O. With respect to regulation, activated by partially methylated beta-cyclodextrin. Functionally, hydroxylates vitamin D(3) into 25-hydroxyvitamin D(3) and 1-alpha,25-dihydroxyvitamin D(3), its physiologically active forms. It first hydroxylates the C-25 position of vitamin D(3) to form 25-hydroxyvitamin D(3), then subsequently hydroxylates the C-1-alpha position to form 1-alpha,25-dihydroxyvitamin D(3). Also displays 25-hydroxylase activity on vitamin D(2) and 7-dehydrocholesterol. May play a role in the biosynthesis of steroid metabolic intermediates. The chain is Vitamin D(3) 25-hydroxylase from Pseudonocardia autotrophica (Amycolata autotrophica).